The following is a 149-amino-acid chain: D-aminoacyl-tRNA deacylase (149 aa).

The Gly-cisPro motif, important for rejection of L-amino acids signature appears at 137-138 (GP).

The protein belongs to the DTD family. In terms of assembly, homodimer.

The protein resides in the cytoplasm. It carries out the reaction glycyl-tRNA(Ala) + H2O = tRNA(Ala) + glycine + H(+). The catalysed reaction is a D-aminoacyl-tRNA + H2O = a tRNA + a D-alpha-amino acid + H(+). In terms of biological role, an aminoacyl-tRNA editing enzyme that deacylates mischarged D-aminoacyl-tRNAs. Also deacylates mischarged glycyl-tRNA(Ala), protecting cells against glycine mischarging by AlaRS. Acts via tRNA-based rather than protein-based catalysis; rejects L-amino acids rather than detecting D-amino acids in the active site. By recycling D-aminoacyl-tRNA to D-amino acids and free tRNA molecules, this enzyme counteracts the toxicity associated with the formation of D-aminoacyl-tRNA entities in vivo and helps enforce protein L-homochirality. The protein is D-aminoacyl-tRNA deacylase of Syntrophobacter fumaroxidans (strain DSM 10017 / MPOB).